A 447-amino-acid polypeptide reads, in one-letter code: Phosphatidylinositol 4-kinase type 2-alpha (447 aa).

The disordered stretch occupies residues 1–77 (MDETSPLVSP…HRNEFPEDPE (77 aa)). A compositionally biased stretch (basic and acidic residues) spans 48–77 (RSRERQPLLDRDRGASPRDPHRNEFPEDPE). The PI3K/PI4K catalytic domain maps to 92 to 421 (GIYPERIYQG…VQMPPVIVET (330 aa)). Positions 98-104 (IYQGSSG) are G-loop. ATP-binding positions include 99-105 (YQGSSGS) and K120. An important for substrate binding region spans residues 125-127 (EPY). Positions 133–146 (KWTKWLQKLCCPCC) are important for interaction with membranes. S-palmitoyl cysteine attachment occurs at residues C142, C143, C145, and C146. 229 to 232 (QIFV) contacts ATP. Positions 236 to 244 (KDADFWLRR) are important for interaction with membranes. A catalytic loop region spans residues 273–281 (RNTDRGNDN). The interval 312 to 332 (AIDNGLAFPLKHPDSWRAYPF) is activation loop. Residue D314 participates in ATP binding. Residues 327–336 (WRAYPFYWAW) form an important for interaction with membranes region.

It belongs to the PI3/PI4-kinase family. Type II PI4K subfamily.

The protein resides in the golgi apparatus. The protein localises to the trans-Golgi network membrane. It is found in the membrane raft. It localises to the endosome. Its subcellular location is the cytoplasmic vesicle. The protein resides in the cell projection. The protein localises to the dendrite. It is found in the presynaptic cell membrane. It localises to the synapse. Its subcellular location is the synaptosome. The protein resides in the mitochondrion. The protein localises to the membrane. It is found in the cell membrane. It localises to the perikaryon. Its subcellular location is the neuron projection. It catalyses the reaction a 1,2-diacyl-sn-glycero-3-phospho-(1D-myo-inositol) + ATP = a 1,2-diacyl-sn-glycero-3-phospho-(1D-myo-inositol 4-phosphate) + ADP + H(+). In terms of biological role, membrane-bound phosphatidylinositol-4 kinase (PI4-kinase) that catalyzes the phosphorylation of phosphatidylinositol (PI) to phosphatidylinositol 4-phosphate (PI4P), a lipid that plays important roles in endocytosis, Golgi function, protein sorting and membrane trafficking. Besides, phosphorylation of phosphatidylinositol (PI) to phosphatidylinositol 4-phosphate (PI4P) is the first committed step in the generation of phosphatidylinositol 4,5-bisphosphate (PIP2), a precursor of the second messenger inositol 1,4,5-trisphosphate (InsP3). The polypeptide is Phosphatidylinositol 4-kinase type 2-alpha (pi4k2a) (Danio rerio (Zebrafish)).